The chain runs to 255 residues: 5-oxoprolinase subunit A (255 aa).

The protein belongs to the LamB/PxpA family. In terms of assembly, forms a complex composed of PxpA, PxpB and PxpC.

It catalyses the reaction 5-oxo-L-proline + ATP + 2 H2O = L-glutamate + ADP + phosphate + H(+). In terms of biological role, catalyzes the cleavage of 5-oxoproline to form L-glutamate coupled to the hydrolysis of ATP to ADP and inorganic phosphate. This is 5-oxoprolinase subunit A from Thermococcus onnurineus (strain NA1).